The primary structure comprises 207 residues: Tereporin-Ts1 (207 aa).

Residues V1–S11 form the signal peptide. The tract at residues S35–R54 is N-terminal region. Phosphocholine-binding residues include G111, S129, P131, Y164, and Y165.

Belongs to the actinoporin family. Conoidea subfamily. In terms of assembly, octamer or nonamer in membranes. Monomer in the soluble state. Expressed by the venom duct.

The protein localises to the secreted. It localises to the nematocyst. It is found in the target cell membrane. Pore-forming protein that forms pores of around 1 nm and causes cardiac stimulation and cytolysis. The sequence is that of Tereporin-Ts1 from Terebra subulata (Chocolate spotted auger).